The primary structure comprises 350 residues: Chorismate synthase (350 aa).

Positions 39 and 45 each coordinate NADP(+). Residues 119–121 (RSS), 213–214 (QA), G258, 273–277 (KPIPT), and R299 contribute to the FMN site.

It belongs to the chorismate synthase family. As to quaternary structure, homotetramer. It depends on FMNH2 as a cofactor.

It carries out the reaction 5-O-(1-carboxyvinyl)-3-phosphoshikimate = chorismate + phosphate. It participates in metabolic intermediate biosynthesis; chorismate biosynthesis; chorismate from D-erythrose 4-phosphate and phosphoenolpyruvate: step 7/7. In terms of biological role, catalyzes the anti-1,4-elimination of the C-3 phosphate and the C-6 proR hydrogen from 5-enolpyruvylshikimate-3-phosphate (EPSP) to yield chorismate, which is the branch point compound that serves as the starting substrate for the three terminal pathways of aromatic amino acid biosynthesis. This reaction introduces a second double bond into the aromatic ring system. The sequence is that of Chorismate synthase from Thermoanaerobacter pseudethanolicus (strain ATCC 33223 / 39E) (Clostridium thermohydrosulfuricum).